A 240-amino-acid polypeptide reads, in one-letter code: Uridylate kinase (240 aa).

Residue 13–16 (KASG) participates in ATP binding. Glycine 55 provides a ligand contact to UMP. 2 residues coordinate ATP: glycine 56 and arginine 60. Residues aspartate 75 and 136-143 (TGNPFFTT) contribute to the UMP site. 4 residues coordinate ATP: threonine 163, glutamine 164, tyrosine 169, and aspartate 172.

Belongs to the UMP kinase family. As to quaternary structure, homohexamer.

The protein resides in the cytoplasm. The enzyme catalyses UMP + ATP = UDP + ADP. It functions in the pathway pyrimidine metabolism; CTP biosynthesis via de novo pathway; UDP from UMP (UMPK route): step 1/1. With respect to regulation, inhibited by UTP. Its function is as follows. Catalyzes the reversible phosphorylation of UMP to UDP. The polypeptide is Uridylate kinase (Mesorhizobium japonicum (strain LMG 29417 / CECT 9101 / MAFF 303099) (Mesorhizobium loti (strain MAFF 303099))).